Consider the following 426-residue polypeptide: 3-phosphoshikimate 1-carboxyvinyltransferase (426 aa).

3 residues coordinate 3-phosphoshikimate: K22, S23, and R27. A phosphoenolpyruvate-binding site is contributed by K22. 2 residues coordinate phosphoenolpyruvate: G96 and R124. Positions 170, 171, 172, 198, 314, 337, and 341 each coordinate 3-phosphoshikimate. Q172 provides a ligand contact to phosphoenolpyruvate. The Proton acceptor role is filled by D314. The phosphoenolpyruvate site is built by R345, R387, and K412.

It belongs to the EPSP synthase family. As to quaternary structure, monomer.

The protein resides in the cytoplasm. It carries out the reaction 3-phosphoshikimate + phosphoenolpyruvate = 5-O-(1-carboxyvinyl)-3-phosphoshikimate + phosphate. It participates in metabolic intermediate biosynthesis; chorismate biosynthesis; chorismate from D-erythrose 4-phosphate and phosphoenolpyruvate: step 6/7. Its function is as follows. Catalyzes the transfer of the enolpyruvyl moiety of phosphoenolpyruvate (PEP) to the 5-hydroxyl of shikimate-3-phosphate (S3P) to produce enolpyruvyl shikimate-3-phosphate and inorganic phosphate. This chain is 3-phosphoshikimate 1-carboxyvinyltransferase, found in Shewanella baltica (strain OS155 / ATCC BAA-1091).